The following is a 663-amino-acid chain: Nucleolar complex-associated protein 3 (663 aa).

The segment at 1 to 132 (MAKRNRSQFR…AKEDEPDTEE (132 aa)) is disordered. Residues 82 to 97 (GKVERKLHKAQEKPKD) show a composition bias toward basic and acidic residues. The segment covering 98-130 (DDEEDEDSNDSSEDDEGPNEEQEAEAKEDEPDT) has biased composition (acidic residues). The stretch at 363–408 (KKDRVHLSKKQRKARKEMQQIEEEMRNAEQAVSAEERERNQSEILK) forms a coiled coil. At Ser-395 the chain carries Phosphoserine.

It belongs to the CBF/MAK21 family. Forms a heterodimer with NOC2. This complex may be associated with pre-ribosomal particles. Also interacts with MCM2, MCM5 and ORC1.

The protein resides in the nucleus. It is found in the nucleolus. Functionally, required for synthesis of 60S ribosomal subunits and the transport of pre-ribosomes from the nucleoplasm to the cytoplasm. Also required for initiation of DNA replication. May function downstream of the origin recognition complex (ORC complex) in the loading of CDC6 and the minichromosome maintenance complex (MCM complex) onto chromatin during the G1 phase of the cell cycle. Essential for growth. This chain is Nucleolar complex-associated protein 3 (NOC3), found in Saccharomyces cerevisiae (strain ATCC 204508 / S288c) (Baker's yeast).